Here is a 291-residue protein sequence, read N- to C-terminus: uncharacterized protein (291 aa).

NAD(+) contacts are provided by residues 5-19 (AFIG…MAGH) and threonine 97. The active site involves lysine 172. Lysine 240 is an NAD(+) binding site.

This sequence belongs to the HIBADH-related family.

This is an uncharacterized protein from Shewanella frigidimarina (strain NCIMB 400).